Consider the following 383-residue polypeptide: ATP phosphoribosyltransferase regulatory subunit (383 aa).

It belongs to the class-II aminoacyl-tRNA synthetase family. HisZ subfamily. Heteromultimer composed of HisG and HisZ subunits.

The protein localises to the cytoplasm. It participates in amino-acid biosynthesis; L-histidine biosynthesis; L-histidine from 5-phospho-alpha-D-ribose 1-diphosphate: step 1/9. Functionally, required for the first step of histidine biosynthesis. May allow the feedback regulation of ATP phosphoribosyltransferase activity by histidine. The chain is ATP phosphoribosyltransferase regulatory subunit from Neisseria gonorrhoeae (strain ATCC 700825 / FA 1090).